Reading from the N-terminus, the 218-residue chain is Adenylate kinase (218 aa).

Residue 10 to 15 participates in ATP binding; it reads GAGKGT. An NMP region spans residues 30 to 59; sequence STGDMLRAAVKAGTPLGLEAKKVMDAGGLV. Residues T31, R36, 57 to 59, 85 to 88, and Q92 contribute to the AMP site; these read GLV and GFPR. The segment at 122-159 is LID; that stretch reads GRRVHPASGRSYHVRFNPPKAEGVDDVTGEPLVQRDDD. ATP is bound by residues R123 and 132–133; that span reads SY. AMP is bound by residues R156 and R167. G203 serves as a coordination point for ATP.

This sequence belongs to the adenylate kinase family. Monomer.

Its subcellular location is the cytoplasm. It carries out the reaction AMP + ATP = 2 ADP. It functions in the pathway purine metabolism; AMP biosynthesis via salvage pathway; AMP from ADP: step 1/1. Functionally, catalyzes the reversible transfer of the terminal phosphate group between ATP and AMP. Plays an important role in cellular energy homeostasis and in adenine nucleotide metabolism. This Bordetella bronchiseptica (strain ATCC BAA-588 / NCTC 13252 / RB50) (Alcaligenes bronchisepticus) protein is Adenylate kinase.